The following is a 270-amino-acid chain: Cerberus (270 aa).

Positions 1–20 are cleaved as a signal peptide; it reads MLLNVLRICIIVCLVNDGAG. N103, N112, and N154 each carry an N-linked (GlcNAc...) asparagine glycan. Cystine bridges form between C169-C215, C183-C229, C193-C245, and C197-C247. In terms of domain architecture, CTCK spans 169–253; the sequence is CKTLPFTQNI…ECTCEAHKSN (85 aa). The N-linked (GlcNAc...) asparagine glycan is linked to N228.

This sequence belongs to the DAN family. As to quaternary structure, the long chain interacts with nodal/nr-1, bmp4 and wnt8, thereby inhibiting their function. The short chain interacts with nodal/nr-1 but not bmp4 or wnt8. A component of the Nieuwkoop signaling center in the blastula. Expressed transiently in a broad anterior domain of the gastrula, including the anterior endoderm of the Spemann's organizer and more laterally the cardiac primordia. Expression is excluded from the prospective prechordal plate region and the ring of cells that give rise to the trunk-tail mesoderm.

It localises to the secreted. Its function is as follows. Inhibits wnt, nodal/nr-1 and bmp signaling in the embryo to promote head formation and anterior neural induction. Within the endoderm, acts as an essential mediator of nodal/nr-1-induced cardiogenesis in the overlying mesoderm. This chain is Cerberus, found in Xenopus laevis (African clawed frog).